Consider the following 202-residue polypeptide: MSFAREASRAIRSSFVLWVIAAVIYPFFMIAVGQIVFPHQANGSLVRDSRGQVLGSTLIGQPFTSDRYFNSRPSTTVYSTANPNKDDNLVLQTGISGASNLAPSNPQLIERIKDEDLNRLQTSGIQPTADLVYTSGSSLDPHITPEAARAQVSRIAKVRQLPPQQLETLITQNTDSRFLGIFGEPGVNVLQLNLALDELKPT.

The chain crosses the membrane as a helical span at residues Leu-17–Phe-37.

This sequence belongs to the KdpC family. In terms of assembly, the system is composed of three essential subunits: KdpA, KdpB and KdpC.

Its subcellular location is the cell inner membrane. Part of the high-affinity ATP-driven potassium transport (or Kdp) system, which catalyzes the hydrolysis of ATP coupled with the electrogenic transport of potassium into the cytoplasm. This subunit acts as a catalytic chaperone that increases the ATP-binding affinity of the ATP-hydrolyzing subunit KdpB by the formation of a transient KdpB/KdpC/ATP ternary complex. In Nostoc sp. (strain PCC 7120 / SAG 25.82 / UTEX 2576), this protein is Potassium-transporting ATPase KdpC subunit 1.